The primary structure comprises 243 residues: Probable septum site-determining protein MinC (243 aa).

The protein belongs to the MinC family. In terms of assembly, interacts with MinD and FtsZ.

Functionally, cell division inhibitor that blocks the formation of polar Z ring septums. Rapidly oscillates between the poles of the cell to destabilize FtsZ filaments that have formed before they mature into polar Z rings. Prevents FtsZ polymerization. The polypeptide is Probable septum site-determining protein MinC (Wigglesworthia glossinidia brevipalpis).